The chain runs to 72 residues: Small proline-rich protein 2A (72 aa).

Residues 1–11 show a composition bias toward low complexity; sequence MSYQQQQCKQP. Positions 1–20 are disordered; sequence MSYQQQQCKQPCQPPPVCPT. Repeat copies occupy residues 21–29, 30–38, and 39–47. Positions 21–47 are 3 X 9 AA tandem repeats of P-K-C-P-[EQ]-P-C-P-P; it reads PKCPEPCPPPKCPEPCPPPKCPQPCPP. The interval 42-72 is disordered; that stretch reads PQPCPPQQCQQKYPPVTPSPPCQSKYPPKSK.

Belongs to the cornifin (SPRR) family. In terms of processing, forms five pairs of intrachain disulfide bonds. As to expression, expressed in intestine; selectively expressed in goblet cells.

It is found in the secreted. It localises to the extracellular space. Its subcellular location is the cytoplasmic vesicle. The protein resides in the secretory vesicle. Functionally, gut bactericidal protein that selectively kills Gram-positive bacteria by binding to negatively charged lipids on bacterial membranes, leading to bacterial membrane permeabilization and disruption. Specifically binds lipids bearing negatively charged headgroups, such as phosphatidic acid, phosphatidylserine (PS), cardiolipin (CL), and phosphatidylinositol phosphates, but not to zwitterionic or neutral lipids. Induced by type-2 cytokines in response to helminth infection and is required to protect against helminth-induced bacterial invasion of intestinal tissue. May also be involved in the development of the cornified envelope of squamous epithelia; however, additional evidences are required to confirm this result in vivo. The protein is Small proline-rich protein 2A of Homo sapiens (Human).